The chain runs to 649 residues: Solute carrier family 22 member 16 (649 aa).

A helical membrane pass occupies residues 19–39; sequence FQIVLYLICAYQSLSCGIHYL. N65 and N108 each carry an N-linked (GlcNAc...) asparagine glycan. Helical transmembrane passes span 156–176, 190–210, 214–234, 244–264, and 268–288; these read MIQP…SYLS, IGVF…SFMI, FLVM…MEII, IHLN…SYLL, and WLYQ…CWML. Residue N315 is glycosylated (N-linked (GlcNAc...) asparagine). A run of 6 helical transmembrane segments spans residues 356–376, 389–409, 417–437, 445–465, 475–495, and 501–521; these read AKMT…YYMF, LYLL…CIWL, TMLL…VMPS, MVAL…YLYT, CLAV…IPFT, and VWIF…GLLS. The span at 530–544 shows a compositional bias: polar residues; that stretch reads TPMKSTWETTEQQVP. Disordered regions lie at residues 530–560 and 579–649; these read TPMK…SFER and SPDA…LGGF.

The protein belongs to the major facilitator (TC 2.A.1) superfamily. Organic cation transporter (TC 2.A.1.19) family.

Its subcellular location is the cell membrane. The catalysed reaction is (R)-carnitine(in) = (R)-carnitine(out). The enzyme catalyses spermidine(in) = spermidine(out). Functionally, facilitative organic cation transporter that mediates the transport of carnitine as well as the polyamine spermidine. Mediates the partially Na(+)-dependent bidirectional transport of carnitine. May mediate L-carnitine secretion from testis epididymal epithelium into the lumen which is involved in the maturation of spermatozoa. The protein is Solute carrier family 22 member 16 of Mus musculus (Mouse).